The following is an 80-amino-acid chain: Acyl carrier protein (80 aa).

Positions 2-77 constitute a Carrier domain; sequence KNIEERIKKI…KSIDFIQKKN (76 aa). Ser-37 bears the O-(pantetheine 4'-phosphoryl)serine mark.

The protein belongs to the acyl carrier protein (ACP) family. 4'-phosphopantetheine is transferred from CoA to a specific serine of apo-ACP by AcpS. This modification is essential for activity because fatty acids are bound in thioester linkage to the sulfhydryl of the prosthetic group.

It is found in the cytoplasm. It participates in lipid metabolism; fatty acid biosynthesis. Carrier of the growing fatty acid chain in fatty acid biosynthesis. This is Acyl carrier protein from Buchnera aphidicola subsp. Acyrthosiphon pisum (strain APS) (Acyrthosiphon pisum symbiotic bacterium).